The primary structure comprises 202 residues: Securin (202 aa).

Position 2 is an N-acetylalanine (Ala2). Residues 35-94 (LDGRSQVSTPRFGKTFDAPPALPKATRKALGTVNRATEKSVKTKGPLKQKQPSFSAKKMT) form a disordered region. The short motif at 61–64 (RKAL) is the D-box element. 2 consecutive short sequence motifs (TEK-box) follow at residues 71–73 (TEK) and 94–96 (TEK). Positions 163-173 (PPSPVRMPSPP) match the SH3-binding motif. The residue at position 165 (Ser165) is a Phosphoserine; by CDK1.

Belongs to the securin family. In terms of assembly, interacts with RPS10 and DNAJA1. Interacts with the caspase-like ESPL1, and prevents its protease activity probably by covering its active site. Interacts with TP53 and blocks its activity probably by blocking its binding to DNA. Interacts with the Ku 70 kDa subunit of ds-DNA kinase. Interacts with PTTG1IP. Phosphorylated at Ser-165 by CDK1 during mitosis. Post-translationally, phosphorylated in vitro by ds-DNA kinase. In terms of processing, ubiquitinated through 'Lys-11' linkage of ubiquitin moieties by the anaphase promoting complex (APC) at the onset of anaphase, conducting to its degradation. 'Lys-11'-linked ubiquitination is mediated by the E2 ligase UBE2C/UBCH10.

The protein resides in the cytoplasm. The protein localises to the nucleus. Regulatory protein, which plays a central role in chromosome stability, in the p53/TP53 pathway, and DNA repair. Probably acts by blocking the action of key proteins. During the mitosis, it blocks Separase/ESPL1 function, preventing the proteolysis of the cohesin complex and the subsequent segregation of the chromosomes. At the onset of anaphase, it is ubiquitinated, conducting to its destruction and to the liberation of ESPL1. Its function is however not limited to a blocking activity, since it is required to activate ESPL1. Negatively regulates the transcriptional activity and related apoptosis activity of TP53. The negative regulation of TP53 may explain the strong transforming capability of the protein when it is overexpressed. May also play a role in DNA repair via its interaction with Ku, possibly by connecting DNA damage-response pathways with sister chromatid separation. The sequence is that of Securin (PTTG1) from Gorilla gorilla gorilla (Western lowland gorilla).